Consider the following 250-residue polypeptide: DNA repair protein RecO (250 aa).

Belongs to the RecO family.

Functionally, involved in DNA repair and RecF pathway recombination. The sequence is that of DNA repair protein RecO from Staphylococcus aureus (strain COL).